The sequence spans 463 residues: POU domain, class 2, transcription factor 2 (463 aa).

Disordered regions lie at residues 1-87 (MVHS…QPHL), 159-182 (QPRAGLPTQPPKCLEPPSHPEEPS), 259-282 (SSLPSPNQLSSPSLGFDGLPGRRR), 341-376 (PCSAAPMLPSPGKPTSYSPHLVTPQGGAGTLPLSQA), and 393-463 (TLHP…PYQP). A compositionally biased stretch (basic and acidic residues) spans 12–37 (RMSKPLEAEKQSLDSPSEHTDTERNG). Polar residues predominate over residues 41–60 (NHQNPQNKASPFSVSPTGPS). Pro residues predominate over residues 75 to 85 (AAPPPPQPAQP). Positions 179 to 253 (EEPSDLEELE…LLEKWLNDAE (75 aa)) constitute a POU-specific domain. Positions 259-272 (SSLPSPNQLSSPSL) are enriched in low complexity. The segment at residues 281-340 (RRKKRTSIETNVRFALEKSFLANQKPTSEEILLIAEQLHMEKEVIRVWFCNRRQKEKRIN) is a DNA-binding region (homeobox). The segment at 373–394 (LSQASSSLSTTVTTLSSAVGTL) is leucine-zipper. Over residues 400 to 409 (AGGGGGGGGA) the composition is skewed to gly residues.

This sequence belongs to the POU transcription factor family. Class-2 subfamily. In terms of assembly, interacts with NR3C1, AR and PGR. Interacts with POU2AF1; the interaction increases POU2F2 transactivation activity. In terms of tissue distribution, highest in B cells, but also present in brain (neuronal and glial cells), intestine, kidney, and testes. As to expression, expressed at higher levels in B-cells than in neuronal cells. Expressed in neuronal cell lines and brain, but not dorsal root ganglia. In terms of tissue distribution, expressed at lower levels in neuronal cells than in B cells. As to expression, expressed in neuronal cell lines, and at lower levels in neuroblastoma and dorsal root ganglia. Widely expressed in the developing nervous system but expression is confined to very specific regions in the adult brain, it is expressed at a lower level in B cells. In terms of tissue distribution, either absent in, or expressed at very low levels in neuronal cells and brain. As to expression, expressed in all tissues tested: mammary gland, liver, spleen, lung, kidney intestine, uterus and ovary of a virgin mouse. Levels of isoform OCT2.7 are highest in spleen and lung. In mammary gland, expression is localized to the alveolus epithelial cells.

It is found in the cytoplasm. The protein localises to the nucleus. Transactivation activity is enhanced by transcriptional coactivator POU2AF1. Its function is as follows. Transcription factor that specifically binds to the octamer motif (5'-ATTTGCAT-3'). Regulates IL6 expression in B cells with POU2AF1. Regulates transcription in a number of tissues in addition to activating immunoglobulin gene expression. Modulates transcription transactivation by NR3C1, AR and PGR. Activates octamer-containing promoters. Functionally, represses some promoters and activate others. In terms of biological role, represses some promoters and activate others. Activates the U2 small nuclear RNA (snRNA) promoter. Its function is as follows. Unable to bind to the octamer motif, but can still activate the beta-casein gene promoter at low levels. In Mus musculus (Mouse), this protein is POU domain, class 2, transcription factor 2.